Consider the following 295-residue polypeptide: GTP-binding protein GEM (295 aa).

The segment at cysteine 39–serine 64 is disordered. GTP contacts are provided by residues glycine 81–serine 88 and asparagine 190–aspartate 193. Residues alanine 265–leucine 284 are calmodulin-binding.

Belongs to the small GTPase superfamily. RGK family. In terms of assembly, interacts with calmodulin in a Ca(2+)-dependent manner. Calmodulin binding significantly decreases GTP binding. Binds ROCK1. In terms of processing, phosphorylated on tyrosine residues.

It is found in the cell membrane. Functionally, could be a regulatory protein, possibly participating in receptor-mediated signal transduction at the plasma membrane. Has guanine nucleotide-binding activity but undetectable intrinsic GTPase activity. The polypeptide is GTP-binding protein GEM (Gem) (Mus musculus (Mouse)).